Reading from the N-terminus, the 494-residue chain is DEAD-box ATP-dependent RNA helicase CshA (494 aa).

The Q motif motif lies at 3-31 (ITFQDFNLSSDLMKAINRMGFEEATPIQA). The Helicase ATP-binding domain maps to 34–204 (IPLGLSNKDV…ERFMTEPEHV (171 aa)). 47-54 (AQTGTGKT) serves as a coordination point for ATP. Positions 152–155 (DEAD) match the DEAD box motif. In terms of domain architecture, Helicase C-terminal spans 215-375 (NIQQFYLEVQ…RMKEPTLDEA (161 aa)). The segment at 413–494 (VTVVAAAIKM…SGDRRQKKSY (82 aa)) is required for dimerization or oligomerization. Residues 429–494 (DTPVRLTDEA…SGDRRQKKSY (66 aa)) are disordered. Over residues 443–452 (KRYKNQRSSK) the composition is skewed to basic residues. The span at 473–488 (SYDKKRSNDRRSSGDR) shows a compositional bias: basic and acidic residues.

It belongs to the DEAD box helicase family. CshA subfamily. In terms of assembly, homodimer or oligomer. May interact with RNA helicases CshB and DbpA (DeaD). Probably a component of the RNA degradosome complex composed of rny, rnjA, rnjB, pnp, pfkA and eno, and possibly also rnpA (although rnjA and rnjB's presence is unclear). Interacts with ribosomal proteins L1 and L3 (rplA and rplC) and the protein component of RNase RnpA. Interacts with the RNA polymerase core. Mg(2+) is required as a cofactor.

It localises to the cytoplasm. The protein localises to the nucleoid. It is found in the cell membrane. The catalysed reaction is ATP + H2O = ADP + phosphate + H(+). RNA helicase activity is inhibited by EDTA. In terms of biological role, the most abundant DEAD-box RNA helicase. An ATP-dependent RNA helicase with RNA-dependent ATPase activity. May work in conjunction with the cold shock proteins to ensure proper initiation of transcription at low and optimal temperatures. In vitro, unwinds dsRNA in both 5'- and 3'- directions. Plays a role in ribosomal 50S subunit assembly. Its deletion leads to changes in mRNA levels for over 200 transcripts. The protein is DEAD-box ATP-dependent RNA helicase CshA of Bacillus subtilis (strain 168).